A 249-amino-acid polypeptide reads, in one-letter code: Octanoyltransferase (249 aa).

One can recognise a BPL/LPL catalytic domain in the interval 53 to 234 (PDTDDEIWVV…RLIAHLDGAT (182 aa)). Residues 93–100 (RGGQITYH), 165–167 (ALG), and 178–180 (GLS) contribute to the substrate site. Cysteine 196 acts as the Acyl-thioester intermediate in catalysis.

The protein belongs to the LipB family.

The protein localises to the cytoplasm. The catalysed reaction is octanoyl-[ACP] + L-lysyl-[protein] = N(6)-octanoyl-L-lysyl-[protein] + holo-[ACP] + H(+). It participates in protein modification; protein lipoylation via endogenous pathway; protein N(6)-(lipoyl)lysine from octanoyl-[acyl-carrier-protein]: step 1/2. In terms of biological role, catalyzes the transfer of endogenously produced octanoic acid from octanoyl-acyl-carrier-protein onto the lipoyl domains of lipoate-dependent enzymes. Lipoyl-ACP can also act as a substrate although octanoyl-ACP is likely to be the physiological substrate. In Burkholderia mallei (strain NCTC 10247), this protein is Octanoyltransferase.